We begin with the raw amino-acid sequence, 383 residues long: Acetylornithine deacetylase (383 aa).

H80 is a Zn(2+) binding site. Residue D82 is part of the active site. Position 112 (D112) interacts with Zn(2+). E144 is an active-site residue. The Zn(2+) site is built by E145, E169, and H355.

Belongs to the peptidase M20A family. ArgE subfamily. Homodimer. Zn(2+) is required as a cofactor. The cofactor is Co(2+). Requires glutathione as cofactor.

The protein localises to the cytoplasm. It carries out the reaction N(2)-acetyl-L-ornithine + H2O = L-ornithine + acetate. It functions in the pathway amino-acid biosynthesis; L-arginine biosynthesis; L-ornithine from N(2)-acetyl-L-ornithine (linear): step 1/1. Its function is as follows. Catalyzes the hydrolysis of the amide bond of N(2)-acetylated L-amino acids. Cleaves the acetyl group from N-acetyl-L-ornithine to form L-ornithine, an intermediate in L-arginine biosynthesis pathway, and a branchpoint in the synthesis of polyamines. The chain is Acetylornithine deacetylase from Escherichia coli (strain K12 / MC4100 / BW2952).